The following is a 522-amino-acid chain: Neutral amino acid uniporter 4 (522 aa).

Transmembrane regions (helical) follow at residues 115-135, 181-201, 226-246, 255-275, 293-313, 329-349, 377-397, 409-429, 435-455, and 467-487; these read AGVLLGPISLLFFGIISIHCM, LVDWFLVVTQLGFCSVYFVFL, SLDLRIYMFSFLPLIIPLVFI, LSFFANVSMAISLLIVYQYVI, YPLFFGTAIFAFEGIGVVLPL, IGMAIVTTLYISLATLGYFCF, FGIYVTYAIQYYVPAEIILPA, LCEFTMRFFLVCLTCAVAVLI, VISFVGAVSSSTLALILPPLV, and PWVIMKDVGIAVIGFVGFIAG. N515 carries N-linked (GlcNAc...) asparagine glycosylation.

It belongs to the amino acid/polyamine transporter 2 family.

The protein localises to the lysosome membrane. The enzyme catalyses L-tryptophan(in) = L-tryptophan(out). It catalyses the reaction L-alanine(in) = L-alanine(out). The catalysed reaction is L-proline(in) = L-proline(out). Uniporter that mediates the transport of neutral amino acids like L-tryptophan, proline and alanine. The transport activity is sodium ions-independent, electroneutral and therefore functions via facilitated diffusion. The protein is Neutral amino acid uniporter 4 of Xenopus laevis (African clawed frog).